Consider the following 279-residue polypeptide: Pantothenate synthetase (279 aa).

M26 to H33 contacts ATP. H33 acts as the Proton donor in catalysis. Q57 provides a ligand contact to (R)-pantoate. Position 57 (Q57) interacts with beta-alanine. G144–D147 serves as a coordination point for ATP. Residue Q150 coordinates (R)-pantoate. ATP contacts are provided by residues V173 and L181–R184.

The protein belongs to the pantothenate synthetase family. As to quaternary structure, homodimer.

It is found in the cytoplasm. The catalysed reaction is (R)-pantoate + beta-alanine + ATP = (R)-pantothenate + AMP + diphosphate + H(+). It participates in cofactor biosynthesis; (R)-pantothenate biosynthesis; (R)-pantothenate from (R)-pantoate and beta-alanine: step 1/1. In terms of biological role, catalyzes the condensation of pantoate with beta-alanine in an ATP-dependent reaction via a pantoyl-adenylate intermediate. In Burkholderia ambifaria (strain MC40-6), this protein is Pantothenate synthetase.